We begin with the raw amino-acid sequence, 78 residues long: Translation initiation factor IF-1, chloroplastic (78 aa).

The 72-residue stretch at 1–72 (MEKQKLIDME…TKGRITYRLR (72 aa)) folds into the S1-like domain.

This sequence belongs to the IF-1 family. As to quaternary structure, component of the 30S ribosomal translation pre-initiation complex which assembles on the 30S ribosome in the order IF-2 and IF-3, IF-1 and N-formylmethionyl-tRNA(fMet); mRNA recruitment can occur at any time during PIC assembly.

It localises to the plastid. Its subcellular location is the chloroplast. Functionally, one of the essential components for the initiation of protein synthesis. Stabilizes the binding of IF-2 and IF-3 on the 30S subunit to which N-formylmethionyl-tRNA(fMet) subsequently binds. Helps modulate mRNA selection, yielding the 30S pre-initiation complex (PIC). Upon addition of the 50S ribosomal subunit IF-1, IF-2 and IF-3 are released leaving the mature 70S translation initiation complex. The polypeptide is Translation initiation factor IF-1, chloroplastic (Marchantia polymorpha (Common liverwort)).